A 261-amino-acid chain; its full sequence is Chanoclavine-I dehydrogenase easD (261 aa).

Residues I18, K48, D66, R132, Y166, K170, and T201 each contribute to the NADP(+) site. The active-site Proton donor is Y166. The active-site Lowers pKa of active site Tyr is K170.

It belongs to the short-chain dehydrogenases/reductases (SDR) family.

It carries out the reaction chanoclavine-I + NAD(+) = chanoclavine-I aldehyde + NADH + H(+). The protein operates within alkaloid biosynthesis; ergot alkaloid biosynthesis. Its function is as follows. Chanoclavine-I dehydrogenase; part of the gene cluster that mediates the biosynthesis of fumiclavanine C, a fungal ergot alkaloid. DmaW catalyzes the first step of ergot alkaloid biosynthesis by condensing dimethylallyl diphosphate (DMAP) and tryptophan to form 4-dimethylallyl-L-tryptophan. The second step is catalyzed by the methyltransferase easF that methylates 4-dimethylallyl-L-tryptophan in the presence of S-adenosyl-L-methionine, resulting in the formation of 4-dimethylallyl-L-abrine. The catalase easC and the FAD-dependent oxidoreductase easE then transform 4-dimethylallyl-L-abrine to chanoclavine-I which is further oxidized by EasD in the presence of NAD(+), resulting in the formation of chanoclavine-I aldehyde. EasA reduces chanoclavine-I aldehyde to dihydrochanoclavine-I aldehyde that spontaneously dehydrates to form 6,8-dimethyl-6,7-didehydroergoline. EasG then catalyzes the reduction of 6,8-dimethyl-6,7-didehydroergoline to form festuclavine. Hydrolysis of festuclavine by easM then leads to the formation of fumigaclavine B which is in turn acetylated by easN to fumigaclavine A. Finally, easL catalyzes the conversion of fumigaclavine A into fumigaclavine C by attaching a dimethylallyl moiety to C-2 of the indole nucleus. The chain is Chanoclavine-I dehydrogenase easD from Aspergillus fumigatus (strain ATCC MYA-4609 / CBS 101355 / FGSC A1100 / Af293) (Neosartorya fumigata).